The following is a 513-amino-acid chain: GMP synthase [glutamine-hydrolyzing] (513 aa).

Residues 9-198 (LILVLDFGSQ…VRRVCDCIGE (190 aa)) form the Glutamine amidotransferase type-1 domain. The active-site Nucleophile is the cysteine 86. Catalysis depends on residues histidine 172 and glutamate 174. A GMPS ATP-PPase domain is found at 199–388 (WSMENFIEIE…LGIPEHLVWR (190 aa)). Residue 226–232 (SGGVDSS) coordinates ATP.

In terms of assembly, homodimer.

It carries out the reaction XMP + L-glutamine + ATP + H2O = GMP + L-glutamate + AMP + diphosphate + 2 H(+). The protein operates within purine metabolism; GMP biosynthesis; GMP from XMP (L-Gln route): step 1/1. Functionally, catalyzes the synthesis of GMP from XMP. This is GMP synthase [glutamine-hydrolyzing] from Staphylococcus saprophyticus subsp. saprophyticus (strain ATCC 15305 / DSM 20229 / NCIMB 8711 / NCTC 7292 / S-41).